We begin with the raw amino-acid sequence, 177 residues long: UPF0340 protein STH78 (177 aa).

It belongs to the UPF0340 family.

The chain is UPF0340 protein STH78 from Symbiobacterium thermophilum (strain DSM 24528 / JCM 14929 / IAM 14863 / T).